We begin with the raw amino-acid sequence, 61 residues long: Short neurotoxin 2 (61 aa).

4 disulfides stabilise this stretch: Cys-3–Cys-23, Cys-17–Cys-40, Cys-42–Cys-53, and Cys-54–Cys-59.

This sequence belongs to the three-finger toxin family. Short-chain subfamily. Type I alpha-neurotoxin sub-subfamily. As to expression, expressed by the venom gland.

It is found in the secreted. Binds to muscle nicotinic acetylcholine receptor (nAChR) and inhibit acetylcholine from binding to the receptor, thereby impairing neuromuscular transmission. In Naja haje haje (Egyptian cobra), this protein is Short neurotoxin 2.